The chain runs to 231 residues: Large ribosomal subunit protein uL1 (231 aa).

The protein belongs to the universal ribosomal protein uL1 family. Part of the 50S ribosomal subunit.

Functionally, binds directly to 23S rRNA. The L1 stalk is quite mobile in the ribosome, and is involved in E site tRNA release. Its function is as follows. Protein L1 is also a translational repressor protein, it controls the translation of the L11 operon by binding to its mRNA. In Mesomycoplasma hyopneumoniae (strain 232) (Mycoplasma hyopneumoniae), this protein is Large ribosomal subunit protein uL1.